The primary structure comprises 223 residues: MDVPSSWDALRKQARKIEAQLDEQMHSYRRLVSTKALSKSDGNESDLEAGIDLLLRQLQQVNAQMQAWVSSGGSEMVSHTLTRHQEILQDLTQEFYRHRSSLRAKQEHASLLEDFREFDRTRLDLEDGYGSEQALIKEHMGINRNTAQMDGVISQAQATLGTLVFQRSTFGGINSKLSNVASRLPTVNTILAAIKRKKSMDTIILSLVAAVCTFLIFIYWITK.

The Cytoplasmic segment spans residues 1–201; the sequence is MDVPSSWDAL…AAIKRKKSMD (201 aa). Positions 8–67 form a coiled coil; it reads DALRKQARKIEAQLDEQMHSYRRLVSTKALSKSDGNESDLEAGIDLLLRQLQQVNAQMQA. The helical; Anchor for type IV membrane protein transmembrane segment at 202–222 threads the bilayer; sequence TIILSLVAAVCTFLIFIYWIT. Residue Lys223 is a topological domain, vesicular.

The protein belongs to the GOSR1 family. As to quaternary structure, component of several multiprotein Golgi SNARE complexes.

Its subcellular location is the golgi apparatus membrane. Functionally, involved in transport from the ER to the Golgi apparatus as well as in intra-Golgi transport. It belongs to a super-family of proteins called t-SNAREs or soluble NSF (N-ethylmaleimide-sensitive factor) attachment protein receptor. This is Golgi SNAP receptor complex member 1-1 (GOS11) from Arabidopsis thaliana (Mouse-ear cress).